A 420-amino-acid polypeptide reads, in one-letter code: Serine hydroxymethyltransferase (420 aa).

(6S)-5,6,7,8-tetrahydrofolate is bound by residues Leu123 and 127-129; that span reads GHL. Residue Lys232 is modified to N6-(pyridoxal phosphate)lysine. Residue 357 to 359 participates in (6S)-5,6,7,8-tetrahydrofolate binding; that stretch reads SPF.

This sequence belongs to the SHMT family. Homodimer. It depends on pyridoxal 5'-phosphate as a cofactor.

It is found in the cytoplasm. The catalysed reaction is (6R)-5,10-methylene-5,6,7,8-tetrahydrofolate + glycine + H2O = (6S)-5,6,7,8-tetrahydrofolate + L-serine. The protein operates within one-carbon metabolism; tetrahydrofolate interconversion. Its pathway is amino-acid biosynthesis; glycine biosynthesis; glycine from L-serine: step 1/1. Catalyzes the reversible interconversion of serine and glycine with tetrahydrofolate (THF) serving as the one-carbon carrier. This reaction serves as the major source of one-carbon groups required for the biosynthesis of purines, thymidylate, methionine, and other important biomolecules. Also exhibits THF-independent aldolase activity toward beta-hydroxyamino acids, producing glycine and aldehydes, via a retro-aldol mechanism. In Streptococcus pyogenes serotype M2 (strain MGAS10270), this protein is Serine hydroxymethyltransferase.